A 433-amino-acid polypeptide reads, in one-letter code: Trigger factor (433 aa).

The 86-residue stretch at Gly163–Pro248 folds into the PPIase FKBP-type domain.

It belongs to the FKBP-type PPIase family. Tig subfamily.

It is found in the cytoplasm. It catalyses the reaction [protein]-peptidylproline (omega=180) = [protein]-peptidylproline (omega=0). In terms of biological role, involved in protein export. Acts as a chaperone by maintaining the newly synthesized protein in an open conformation. Functions as a peptidyl-prolyl cis-trans isomerase. This chain is Trigger factor, found in Staphylococcus aureus (strain bovine RF122 / ET3-1).